The sequence spans 245 residues: Small ribosomal subunit protein uS2 (245 aa).

It belongs to the universal ribosomal protein uS2 family.

The chain is Small ribosomal subunit protein uS2 from Pseudomonas fluorescens (strain SBW25).